An 86-amino-acid polypeptide reads, in one-letter code: Large ribosomal subunit protein uL24c (86 aa).

This sequence belongs to the universal ribosomal protein uL24 family. In terms of assembly, part of the 50S ribosomal subunit.

Its subcellular location is the plastid. The protein localises to the chloroplast. One of two assembly initiator proteins, it binds directly to the 5'-end of the 23S rRNA, where it nucleates assembly of the 50S subunit. This Heterosigma akashiwo (strain NIES-293 / 8280G21-1) protein is Large ribosomal subunit protein uL24c (rpl24).